The chain runs to 413 residues: 3-isopropylmalate dehydratase large subunit (413 aa).

The [4Fe-4S] cluster site is built by Cys293, Cys353, and Cys356.

It belongs to the aconitase/IPM isomerase family. LeuC type 2 subfamily. In terms of assembly, heterodimer of LeuC and LeuD. It depends on [4Fe-4S] cluster as a cofactor.

The catalysed reaction is (2R,3S)-3-isopropylmalate = (2S)-2-isopropylmalate. The protein operates within amino-acid biosynthesis; L-leucine biosynthesis; L-leucine from 3-methyl-2-oxobutanoate: step 2/4. In terms of biological role, catalyzes the isomerization between 2-isopropylmalate and 3-isopropylmalate, via the formation of 2-isopropylmaleate. This Picrophilus torridus (strain ATCC 700027 / DSM 9790 / JCM 10055 / NBRC 100828 / KAW 2/3) protein is 3-isopropylmalate dehydratase large subunit.